The chain runs to 149 residues: Transcriptional repressor NrdR (149 aa).

The segment at 3 to 34 is a zinc-finger region; the sequence is CPFCSAVDTKVIDSRLVGEGTQVRRRRQCVIC. The region spanning 49–139 is the ATP-cone domain; that stretch reads PRVIKSNDVR…VYRSFEDIRE (91 aa).

It belongs to the NrdR family. Zn(2+) serves as cofactor.

In terms of biological role, negatively regulates transcription of bacterial ribonucleotide reductase nrd genes and operons by binding to NrdR-boxes. This is Transcriptional repressor NrdR from Sodalis glossinidius (strain morsitans).